We begin with the raw amino-acid sequence, 256 residues long: Thiazole synthase (256 aa).

Lysine 96 functions as the Schiff-base intermediate with DXP in the catalytic mechanism. 1-deoxy-D-xylulose 5-phosphate-binding positions include glycine 157, 184–185, and 206–207; these read AG and NT.

It belongs to the ThiG family. In terms of assembly, homotetramer. Forms heterodimers with either ThiH or ThiS.

Its subcellular location is the cytoplasm. It carries out the reaction [ThiS sulfur-carrier protein]-C-terminal-Gly-aminoethanethioate + 2-iminoacetate + 1-deoxy-D-xylulose 5-phosphate = [ThiS sulfur-carrier protein]-C-terminal Gly-Gly + 2-[(2R,5Z)-2-carboxy-4-methylthiazol-5(2H)-ylidene]ethyl phosphate + 2 H2O + H(+). Its pathway is cofactor biosynthesis; thiamine diphosphate biosynthesis. In terms of biological role, catalyzes the rearrangement of 1-deoxy-D-xylulose 5-phosphate (DXP) to produce the thiazole phosphate moiety of thiamine. Sulfur is provided by the thiocarboxylate moiety of the carrier protein ThiS. In vitro, sulfur can be provided by H(2)S. This chain is Thiazole synthase, found in Brucella canis (strain ATCC 23365 / NCTC 10854 / RM-666).